Reading from the N-terminus, the 331-residue chain is 2-keto-3-deoxygluconate permease (331 aa).

The next 10 helical transmembrane spans lie at I10 to P30, G42 to I62, L77 to P97, G100 to M120, A141 to A161, L163 to A183, P200 to M220, L224 to A244, T254 to A274, and A289 to Y309.

The protein belongs to the KdgT transporter family.

Its subcellular location is the cell inner membrane. It carries out the reaction 2-dehydro-3-deoxy-D-gluconate(in) + H(+)(in) = 2-dehydro-3-deoxy-D-gluconate(out) + H(+)(out). Functionally, catalyzes the proton-dependent uptake of 2-keto-3-deoxygluconate (KDG) into the cell. This Enterobacter sp. (strain 638) protein is 2-keto-3-deoxygluconate permease.